The following is a 295-amino-acid chain: MESSKSPSEVEKSSSASPAPQKPMIRVSKQWVVPPRPKPGRKPALDALGRRKAPIKPRPGPTSALSVEEAKFRVREKQYQDTIGKLQKENNELLEQLEMLQAQLKNSTLDSPKEVEVNSEVVKPDSATTENENRYVNQYNYPVEPPCAKNAVYTEIPIELDPHAFLGDSAKRIRVDSDSKDAKSVPSENGRIRVSMSPQNEINFTPENPAVMEKIRKRGVCNSVEGCLYSGSPKSVKRVRESEETKVYAQLLIDLHKSSKSAPMLKAGPSIAFKLPTMEPNFNDVRPVTSISSSS.

The segment covering 1–19 (MESSKSPSEVEKSSSASPA) has biased composition (low complexity). The interval 1–69 (MESSKSPSEV…GPTSALSVEE (69 aa)) is disordered. Positions 73–111 (RVREKQYQDTIGKLQKENNELLEQLEMLQAQLKNSTLDS) form a coiled coil. A Nuclear export signal motif is present at residues 93–100 (LLEQLEML). Residues 108-130 (TLDSPKEVEVNSEVVKPDSATTE) are disordered.

As to quaternary structure, component of tha CCAAT-binding complex composed of at least php2, php3, php4 and php5. Interacts with crm1 and grx4.

The protein localises to the cytoplasm. It is found in the nucleus. Its subcellular location is the cytoskeleton. The protein resides in the spindle pole. In terms of biological role, component of the transcription regulatory CCAAT-binding complex. Required for the reprogramming of the cell for iron use. Down-regulates pcl1, sdh4, and isa1 underlow-iron conditions. The polypeptide is CCAAT-binding factor complex subunit php4 (php4) (Schizosaccharomyces pombe (strain 972 / ATCC 24843) (Fission yeast)).